Reading from the N-terminus, the 290-residue chain is Ribosomal RNA small subunit methyltransferase A (290 aa).

6 residues coordinate S-adenosyl-L-methionine: Asn27, Leu29, Gly54, Glu75, Asp100, and Asn125.

The protein belongs to the class I-like SAM-binding methyltransferase superfamily. rRNA adenine N(6)-methyltransferase family. RsmA subfamily.

It localises to the cytoplasm. It catalyses the reaction adenosine(1518)/adenosine(1519) in 16S rRNA + 4 S-adenosyl-L-methionine = N(6)-dimethyladenosine(1518)/N(6)-dimethyladenosine(1519) in 16S rRNA + 4 S-adenosyl-L-homocysteine + 4 H(+). Specifically dimethylates two adjacent adenosines (A1518 and A1519) in the loop of a conserved hairpin near the 3'-end of 16S rRNA in the 30S particle. May play a critical role in biogenesis of 30S subunits. The chain is Ribosomal RNA small subunit methyltransferase A from Streptococcus equi subsp. zooepidemicus (strain H70).